A 265-amino-acid polypeptide reads, in one-letter code: Ni-sirohydrochlorin a,c-diamide reductive cyclase complex, component CfbC (265 aa).

It belongs to the NifH/BchL/ChlL family. Homodimer. The Ni-sirohydrochlorin a,c-diamide reductive cyclase complex is composed of a NifH homolog component CfbC and a NifD homolog component CfbD. [4Fe-4S] cluster serves as cofactor.

The enzyme catalyses Ni-sirohydrochlorin a,c-diamide + 3 AH2 + ATP + H2O = 15,17(3)-seco-F430-17(3)-acid + 3 A + ADP + phosphate. In terms of biological role, involved in the biosynthesis of the unique nickel-containing tetrapyrrole coenzyme F430, the prosthetic group of methyl-coenzyme M reductase (MCR), which plays a key role in methanogenesis and anaerobic methane oxidation. Catalyzes both the six-electron reduction of the tetrahydroporphyrin ring system and the gamma-lactamization of the c-acetamide side chain of Ni-sirohydrochlorin a,c-diamide to yield 15,17(3)-seco-F430-17(3)-acid (seco-F430), the last intermediate in the biosynthesis of the coenzyme F430. The chain is Ni-sirohydrochlorin a,c-diamide reductive cyclase complex, component CfbC from Methanosarcina barkeri (strain Fusaro / DSM 804).